Reading from the N-terminus, the 620-residue chain is 1-deoxy-D-xylulose-5-phosphate synthase (620 aa).

Thiamine diphosphate contacts are provided by residues histidine 80 and 121–123 (GHS). Residue aspartate 152 participates in Mg(2+) binding. Thiamine diphosphate is bound by residues 153–154 (GA), asparagine 181, tyrosine 288, and glutamate 370. Asparagine 181 contacts Mg(2+).

This sequence belongs to the transketolase family. DXPS subfamily. In terms of assembly, homodimer. It depends on Mg(2+) as a cofactor. The cofactor is thiamine diphosphate.

The catalysed reaction is D-glyceraldehyde 3-phosphate + pyruvate + H(+) = 1-deoxy-D-xylulose 5-phosphate + CO2. It functions in the pathway metabolic intermediate biosynthesis; 1-deoxy-D-xylulose 5-phosphate biosynthesis; 1-deoxy-D-xylulose 5-phosphate from D-glyceraldehyde 3-phosphate and pyruvate: step 1/1. Functionally, catalyzes the acyloin condensation reaction between C atoms 2 and 3 of pyruvate and glyceraldehyde 3-phosphate to yield 1-deoxy-D-xylulose-5-phosphate (DXP). This chain is 1-deoxy-D-xylulose-5-phosphate synthase, found in Escherichia fergusonii (strain ATCC 35469 / DSM 13698 / CCUG 18766 / IAM 14443 / JCM 21226 / LMG 7866 / NBRC 102419 / NCTC 12128 / CDC 0568-73).